A 115-amino-acid chain; its full sequence is NAD(P)H-quinone oxidoreductase subunit M (115 aa).

The protein belongs to the complex I NdhM subunit family. In terms of assembly, NDH-1 can be composed of about 15 different subunits; different subcomplexes with different compositions have been identified which probably have different functions.

It localises to the cellular thylakoid membrane. It carries out the reaction a plastoquinone + NADH + (n+1) H(+)(in) = a plastoquinol + NAD(+) + n H(+)(out). The enzyme catalyses a plastoquinone + NADPH + (n+1) H(+)(in) = a plastoquinol + NADP(+) + n H(+)(out). NDH-1 shuttles electrons from an unknown electron donor, via FMN and iron-sulfur (Fe-S) centers, to quinones in the respiratory and/or the photosynthetic chain. The immediate electron acceptor for the enzyme in this species is believed to be plastoquinone. Couples the redox reaction to proton translocation, and thus conserves the redox energy in a proton gradient. Cyanobacterial NDH-1 also plays a role in inorganic carbon-concentration. The sequence is that of NAD(P)H-quinone oxidoreductase subunit M from Prochlorococcus marinus subsp. pastoris (strain CCMP1986 / NIES-2087 / MED4).